We begin with the raw amino-acid sequence, 792 residues long: DNA ligase (792 aa).

NAD(+)-binding positions include 42-46 (DAEYD), 91-92 (SL), and E124. The active-site N6-AMP-lysine intermediate is the K126. NAD(+)-binding residues include R147, E189, K306, and K330. Zn(2+) is bound by residues C424, C426, C448, and C454. Residues 714–792 (KTDTAVAGKT…EDEWLAMVGG (79 aa)) form the BRCT domain.

The protein belongs to the NAD-dependent DNA ligase family. LigA subfamily. The cofactor is Mg(2+). Mn(2+) is required as a cofactor.

It carries out the reaction NAD(+) + (deoxyribonucleotide)n-3'-hydroxyl + 5'-phospho-(deoxyribonucleotide)m = (deoxyribonucleotide)n+m + AMP + beta-nicotinamide D-nucleotide.. Its function is as follows. DNA ligase that catalyzes the formation of phosphodiester linkages between 5'-phosphoryl and 3'-hydroxyl groups in double-stranded DNA using NAD as a coenzyme and as the energy source for the reaction. It is essential for DNA replication and repair of damaged DNA. This chain is DNA ligase, found in Caulobacter sp. (strain K31).